Here is a 249-residue protein sequence, read N- to C-terminus: MMSCGGKKPVSKKTTPCCTKMGMKRGPWTVEEDEILVSFIKKEGEGRWRSLPKRAGLLRCGKSCRLRWMNYLRPSVKRGGITSDEEDLILRLHRLLGNRWSLIAGRIPGRTDNEIKNYWNTHLRKKLLRQGIDPQTHKPLDANNIHKPEEEVSGGQKYPLEPISSSHTDDTTVNGGDGDSKNSINVFGGEHGYEDFGFCYDDKFSSFLNSLINDVGDPFGNIIPISQPLQMDDCKDGIVGASSSSLGHD.

2 consecutive HTH myb-type domains span residues 20–72 (KMGM…MNYL) and 73–127 (RPSV…RKKL). 2 consecutive DNA-binding regions (H-T-H motif) follow at residues 48 to 72 (WRSL…MNYL) and 100 to 123 (WSLI…NTHL). Residues 133 to 180 (DPQTHKPLDANNIHKPEEEVSGGQKYPLEPISSSHTDDTTVNGGDGDS) form a disordered region. A compositionally biased stretch (basic and acidic residues) spans 135–150 (QTHKPLDANNIHKPEE).

Interacts with BHLH002/EGL3/MYC146, BHLH012/MYC1 and BHLH042/TT8. In terms of tissue distribution, siliques.

The protein localises to the nucleus. Functionally, transcription activator, when associated with BHLH002/EGL3/MYC146, BHLH012/MYC1 or BHLH042/TT8. The polypeptide is Transcription repressor MYB5 (MYB5) (Arabidopsis thaliana (Mouse-ear cress)).